The sequence spans 494 residues: UPF0371 protein SEQ_1471 (494 aa).

The protein belongs to the UPF0371 family.

This Streptococcus equi subsp. equi (strain 4047) protein is UPF0371 protein SEQ_1471.